The chain runs to 148 residues: Protein TIFY 5B (148 aa).

The 36-residue stretch at 54–89 (PKQESQILTIFYNGHMCVSSDLTHLEANAILSLASR) folds into the Tify domain.

Belongs to the TIFY/JAZ family. Ubiquitinated. Targeted for degradation by the SCF(COI1) E3 ubiquitin ligase-proteasome pathway during jasmonate signaling.

It is found in the nucleus. Repressor of jasmonate responses. The protein is Protein TIFY 5B (TIFY 5B) of Arabidopsis thaliana (Mouse-ear cress).